Reading from the N-terminus, the 201-residue chain is MALKDRFDKIISYFDTDDVSENEVHEVQERTSVQRDSRAATAQEASQRSHMTNSAEEEMIGSRPRTYTYDPNRQERQRVQRDNAYQQATPRVQNKDSVRQQREQVTIALKYPRKYEDAQEIVDLLIVNECVLIDFQYMLDAQARRCLDYIDGASRVLYGSLQKVGSSMFLLTPANVMVDIEEMNIPKTGQETSFDFDMKRR.

Residues valine 27–arginine 38 are compositionally biased toward basic and acidic residues. The segment at valine 27–arginine 99 is disordered. Residues glutamine 43–serine 54 show a composition bias toward polar residues. Over residues asparagine 72 to arginine 81 the composition is skewed to basic and acidic residues. Residues asparagine 83 to valine 92 show a composition bias toward polar residues.

It belongs to the SepF family. Homodimer. Interacts with FtsZ.

The protein resides in the cytoplasm. Functionally, cell division protein that is part of the divisome complex and is recruited early to the Z-ring. Probably stimulates Z-ring formation, perhaps through the cross-linking of FtsZ protofilaments. Its function overlaps with FtsA. In Streptococcus agalactiae serotype V (strain ATCC BAA-611 / 2603 V/R), this protein is Cell division protein SepF.